The sequence spans 527 residues: MEVAMVCTRVNLLILILSLCSPYKFIQSPMDFGPLNLLPTTTTASSDFGRILFHSPSAVLKPQAPRDISLLLSFLSASPLGKVTVAARGAGHSIHGQAQALDGIVVEMSSLPSEIEFYRRGEGDVSYADVGGGIMWIELLEQSLKLGLAPRSWTDYLYLTIGGTLSNAGISGQTFKHGPQISNVLQLEVVTGRGEIVTCSPTKDAELFNAVLGGLGQFGIITRARILLQEAPQKVKWVRAFYDDFATFTKDQELLVSMPVLVDYVEGFIVLNEQSLHSSSIAFPTNVDFNPDFGTKNNPKIYYCIEFAVHDYQNKNINVEQVVEVISRQMSHIASHLYSVEVSYFDFLNRVRMEEMSLRNSGLWEVHHPWLNMFVPSAGISDFRDLLMDSISPDNFEGLILIYPLLRHKWDTNTSVVLPDSGSTDQVMYAVGILRSANPDDGCSHHCLQELLLRHRRLAGAAASGLGAKQYLAHHPTPAGWRRHFGRRWERFADRKARFDPRCILGPGQGIFPRDSSSSNGAFASYS.

Positions 1-22 (MEVAMVCTRVNLLILILSLCSP) are cleaved as a signal peptide. An FAD-binding PCMH-type domain is found at 52-231 (LFHSPSAVLK…TRARILLQEA (180 aa)). Positions 87, 89, and 91 each coordinate FAD. Histidine 92 is modified (pros-8alpha-FAD histidine). Residues serine 93, glutamine 97, aspartate 155, threonine 160, serine 166, isoleucine 170, and isoleucine 221 each contribute to the FAD site. N-linked (GlcNAc...) asparagine glycosylation is present at asparagine 413. FAD is bound by residues tyrosine 471 and glutamine 509.

The protein belongs to the oxygen-dependent FAD-linked oxidoreductase family. Monomer. Requires FAD as cofactor. Expressed in inflorescence meristems. Highly expressed in lamina joints, and mainly in the parenchyma cells and vascular bundles on the abaxial side of the lamina joint. Expressed in roots, stems, leaves and young panicles.

It localises to the endoplasmic reticulum. The enzyme catalyses N(6)-dimethylallyladenine + A + H2O = 3-methyl-2-butenal + adenine + AH2. In terms of biological role, catalyzes the oxidation of cytokinins, a family of N(6)-substituted adenine derivatives, where the substituent is an isopentenyl group. Cytokinins are plant hormones essential for plant growth, development, and stress responses. Exhibits specific activities toward trans-zeatin (tZ) and isopentenyladenine (iP). Plays a role in lamina joint inclination. Regulates cell proliferation and vascular bundle number on the abaxial side of lamina joint. The sequence is that of Cytokinin dehydrogenase 3 from Oryza sativa subsp. japonica (Rice).